The sequence spans 228 residues: UPF0173 metal-dependent hydrolase LMHCC_0991 (228 aa).

The protein belongs to the UPF0173 family.

The protein is UPF0173 metal-dependent hydrolase LMHCC_0991 of Listeria monocytogenes serotype 4a (strain HCC23).